The primary structure comprises 102 residues: Small ribosomal subunit protein uS10 (102 aa).

The protein belongs to the universal ribosomal protein uS10 family. In terms of assembly, part of the 30S ribosomal subunit.

Its function is as follows. Involved in the binding of tRNA to the ribosomes. This chain is Small ribosomal subunit protein uS10, found in Sulfolobus acidocaldarius (strain ATCC 33909 / DSM 639 / JCM 8929 / NBRC 15157 / NCIMB 11770).